Here is a 656-residue protein sequence, read N- to C-terminus: Protein terminal ear1 (656 aa).

Residues 211 to 283 (SLVVLSPLPG…RRLVVEFTRP (73 aa)) enclose the RRM domain. Disordered regions lie at residues 280–408 (FTRP…WKGR) and 576–656 (LTDP…GYDD). The segment covering 288–299 (PRRRGYAPHQHR) has biased composition (basic residues). The span at 314–331 (PSQPTSSQPPASSSSSGS) shows a compositional bias: low complexity. Residues 346-358 (CKSSAGSDQSSKG) show a composition bias toward polar residues. 3 stretches are compositionally biased toward low complexity: residues 377–397 (AAAA…QKGV), 585–601 (RSPA…SRAA), and 612–630 (PAPS…STHA). Positions 642–656 (DIRLAGELRRLGYDD) are enriched in basic and acidic residues.

In terms of tissue distribution, expressed below the shoot tip down the flanks of shoot apex in an alternating pattern. Not expressed in root tips, leaves or immature ears (female inflorescences).

Probable RNA-binding protein. Involved in the regulation of leaf initiation rate and shoot development. Seems to act more predominantly in the early stages of the leaf development, rather than in the later phase. This Zea mays (Maize) protein is Protein terminal ear1 (TE1).